The sequence spans 33 residues: Brevinin-2DYb (33 aa).

The cysteines at positions 27 and 33 are disulfide-linked.

In terms of tissue distribution, expressed by the skin glands.

It is found in the secreted. Its function is as follows. Antimicrobial peptide. Active against the Gram-positive bacterium S.aureus (MIC=30 uM) and the Gram-negative bacterium E.coli (MIC=30 uM). The sequence is that of Brevinin-2DYb from Rana dybowskii (Dybovsky's frog).